The primary structure comprises 463 residues: UDP-N-acetylmuramoyl-L-alanyl-D-glutamate--2,6-diaminopimelate ligase (463 aa).

UDP-N-acetyl-alpha-D-muramoyl-L-alanyl-D-glutamate is bound at residue Thr-21. 94 to 100 (GTNGKTT) serves as a coordination point for ATP. Residues 137–138 (TT), Ser-164, Gln-170, and Arg-172 each bind UDP-N-acetyl-alpha-D-muramoyl-L-alanyl-D-glutamate. Lys-204 is modified (N6-carboxylysine). Meso-2,6-diaminopimelate is bound by residues Arg-358, 382–385 (DNPR), Gly-433, and Glu-437. A Meso-diaminopimelate recognition motif motif is present at residues 382-385 (DNPR).

This sequence belongs to the MurCDEF family. MurE subfamily. It depends on Mg(2+) as a cofactor. In terms of processing, carboxylation is probably crucial for Mg(2+) binding and, consequently, for the gamma-phosphate positioning of ATP.

Its subcellular location is the cytoplasm. It carries out the reaction UDP-N-acetyl-alpha-D-muramoyl-L-alanyl-D-glutamate + meso-2,6-diaminopimelate + ATP = UDP-N-acetyl-alpha-D-muramoyl-L-alanyl-gamma-D-glutamyl-meso-2,6-diaminopimelate + ADP + phosphate + H(+). Its pathway is cell wall biogenesis; peptidoglycan biosynthesis. Functionally, catalyzes the addition of meso-diaminopimelic acid to the nucleotide precursor UDP-N-acetylmuramoyl-L-alanyl-D-glutamate (UMAG) in the biosynthesis of bacterial cell-wall peptidoglycan. In Helicobacter hepaticus (strain ATCC 51449 / 3B1), this protein is UDP-N-acetylmuramoyl-L-alanyl-D-glutamate--2,6-diaminopimelate ligase.